We begin with the raw amino-acid sequence, 472 residues long: MIYIIGSGIAGLSAGVALRRAGKKVTLISKRIDGGSTPIAKGGVAASVGSDDSPELHAQDTIRVGDGLCDVKTVNYVTSEAKNVIETFESWGFEFEEDLRLEGGHTKRRVLHRTDETGREIFNFLLKLAREEGIPIIEDRLVEIRVKDGKVTGFVTEKRGLVEDVDKLVLATGGYSYLYEYSSTQSTNIGDGMAIAFKAGTILADMEFVQFHPTVTSLDGEVFLLTETLRGEGAQIINENGERFLFNYDKRGELAPRDILSRAIYIEMLKGHKVFIDLSKIEDFERKFPVVAKYLARHGHNYKVKIPIFPAAHFVDGGIRVNIRGESNIVNLYAIGEVSDSGLHGANRLASNSLLEGLVFGINLPRYVDSSWEGISTDDGIVHSVRISGNKTLSLKEIRRINWENVGIIRNEEKLVKAINTYSSSTQNEAIISYLTALAAEIRKESRGNHFREDYPYKDPNWEKRIYFKLVV.

Residues 7–10 (SGIA), Ser-29, 36–37 (ST), 42–43 (GG), and Asp-191 each bind FAD. Arg-257 serves as the catalytic Proton donor/acceptor. Residues Glu-337 and 353–354 (SL) contribute to the FAD site.

It belongs to the FAD-dependent oxidoreductase 2 family. NadB subfamily. Monomer. FAD is required as a cofactor.

The protein localises to the cytoplasm. The catalysed reaction is L-aspartate + O2 = iminosuccinate + H2O2. It participates in cofactor biosynthesis; NAD(+) biosynthesis; iminoaspartate from L-aspartate (oxidase route): step 1/1. In terms of biological role, catalyzes the oxidation of L-aspartate to iminoaspartate, the first step in the de novo biosynthesis of NAD(+). Can also use L-asparagine, but not L-phenylalanine, L-glutamate, glycine, L-proline, L-alanine and D-aspartate. The polypeptide is L-aspartate oxidase (Sulfurisphaera tokodaii (strain DSM 16993 / JCM 10545 / NBRC 100140 / 7) (Sulfolobus tokodaii)).